The primary structure comprises 73 residues: Translation initiation factor IF-1 (73 aa).

Residues 1–73 (MAKKDGAIEI…TRGRIVYRYK (73 aa)) form the S1-like domain.

It belongs to the IF-1 family. As to quaternary structure, component of the 30S ribosomal translation pre-initiation complex which assembles on the 30S ribosome in the order IF-2 and IF-3, IF-1 and N-formylmethionyl-tRNA(fMet); mRNA recruitment can occur at any time during PIC assembly.

It localises to the cytoplasm. Its function is as follows. One of the essential components for the initiation of protein synthesis. Stabilizes the binding of IF-2 and IF-3 on the 30S subunit to which N-formylmethionyl-tRNA(fMet) subsequently binds. Helps modulate mRNA selection, yielding the 30S pre-initiation complex (PIC). Upon addition of the 50S ribosomal subunit IF-1, IF-2 and IF-3 are released leaving the mature 70S translation initiation complex. The chain is Translation initiation factor IF-1 from Thermobifida fusca (strain YX).